Reading from the N-terminus, the 269-residue chain is 3-methyl-2-oxobutanoate hydroxymethyltransferase (269 aa).

Aspartate 48 and aspartate 87 together coordinate Mg(2+). 3-methyl-2-oxobutanoate-binding positions include 48-49 (DS), aspartate 87, and lysine 117. Glutamate 119 is a Mg(2+) binding site. Glutamate 186 acts as the Proton acceptor in catalysis.

The protein belongs to the PanB family. As to quaternary structure, homodecamer; pentamer of dimers. Requires Mg(2+) as cofactor.

It is found in the cytoplasm. The catalysed reaction is 3-methyl-2-oxobutanoate + (6R)-5,10-methylene-5,6,7,8-tetrahydrofolate + H2O = 2-dehydropantoate + (6S)-5,6,7,8-tetrahydrofolate. Its pathway is cofactor biosynthesis; (R)-pantothenate biosynthesis; (R)-pantoate from 3-methyl-2-oxobutanoate: step 1/2. Functionally, catalyzes the reversible reaction in which hydroxymethyl group from 5,10-methylenetetrahydrofolate is transferred onto alpha-ketoisovalerate to form ketopantoate. The protein is 3-methyl-2-oxobutanoate hydroxymethyltransferase of Moorella thermoacetica (strain ATCC 39073 / JCM 9320).